The chain runs to 327 residues: Biotin synthase (327 aa).

The 227-residue stretch at 49–275 folds into the Radical SAM core domain; that stretch reads RFGREVSLCS…VNPHAEVRMA (227 aa). 3 residues coordinate [4Fe-4S] cluster: Cys67, Cys71, and Cys74. Residues Ser112, Cys143, Cys203, and Arg273 each contribute to the [2Fe-2S] cluster site.

Belongs to the radical SAM superfamily. Biotin synthase family. Homodimer. It depends on [4Fe-4S] cluster as a cofactor. [2Fe-2S] cluster serves as cofactor.

The catalysed reaction is (4R,5S)-dethiobiotin + (sulfur carrier)-SH + 2 reduced [2Fe-2S]-[ferredoxin] + 2 S-adenosyl-L-methionine = (sulfur carrier)-H + biotin + 2 5'-deoxyadenosine + 2 L-methionine + 2 oxidized [2Fe-2S]-[ferredoxin]. Its pathway is cofactor biosynthesis; biotin biosynthesis; biotin from 7,8-diaminononanoate: step 2/2. Its function is as follows. Catalyzes the conversion of dethiobiotin (DTB) to biotin by the insertion of a sulfur atom into dethiobiotin via a radical-based mechanism. The chain is Biotin synthase from Maridesulfovibrio salexigens (strain ATCC 14822 / DSM 2638 / NCIMB 8403 / VKM B-1763) (Desulfovibrio salexigens).